The sequence spans 104 residues: Protein RnfH (104 aa).

This sequence belongs to the UPF0125 (RnfH) family.

This Pseudomonas savastanoi pv. phaseolicola (strain 1448A / Race 6) (Pseudomonas syringae pv. phaseolicola (strain 1448A / Race 6)) protein is Protein RnfH.